A 427-amino-acid chain; its full sequence is Cyclin-L1-1 (427 aa).

The segment at His258–Gln427 is disordered. Residues Asp263–Ala276 are compositionally biased toward polar residues. Basic and acidic residues-rich tracts occupy residues Gln289–Lys311, Lys328–Arg382, Asp390–Lys400, and Arg407–Lys421.

This sequence belongs to the cyclin family. Cyclin L subfamily.

This is Cyclin-L1-1 (CYCL1-1) from Oryza sativa subsp. japonica (Rice).